Here is a 393-residue protein sequence, read N- to C-terminus: Flap endonuclease 1 (393 aa).

Residues 1-108 (MGVLGLSKLL…SELESRRQRA (108 aa)) are N-domain. D34 serves as a coordination point for Mg(2+). A DNA-binding site is contributed by R74. D90 contributes to the Mg(2+) binding site. Positions 99–120 (SELESRRQRAEDAKHEFEKAKE) are enriched in basic and acidic residues. The segment at 99–127 (SELESRRQRAEDAKHEFEKAKEEGDDEAM) is disordered. The interval 126–257 (AMEKMSKRMV…HKAWEGIKKY (132 aa)) is I-domain. Mg(2+)-binding residues include E162, E164, D183, and D185. Residue E162 participates in DNA binding. DNA-binding residues include G235 and D237. D237 contributes to the Mg(2+) binding site. An interaction with PCNA region spans residues 340–348 (TQGRLDQFF). Residues 358–393 (NSEASTAGTKRNRGAVALPGVLQRKSSSGHKKAVKK) form a disordered region. A compositionally biased stretch (basic residues) spans 384-393 (SSGHKKAVKK).

It belongs to the XPG/RAD2 endonuclease family. FEN1 subfamily. In terms of assembly, interacts with PCNA. Three molecules of FEN1 bind to one PCNA trimer with each molecule binding to one PCNA monomer. PCNA stimulates the nuclease activity without altering cleavage specificity. The cofactor is Mg(2+). Post-translationally, phosphorylated. Phosphorylation upon DNA damage induces relocalization to the nuclear plasma.

It localises to the nucleus. Its subcellular location is the nucleolus. It is found in the nucleoplasm. The protein resides in the mitochondrion. Functionally, structure-specific nuclease with 5'-flap endonuclease and 5'-3' exonuclease activities involved in DNA replication and repair. During DNA replication, cleaves the 5'-overhanging flap structure that is generated by displacement synthesis when DNA polymerase encounters the 5'-end of a downstream Okazaki fragment. It enters the flap from the 5'-end and then tracks to cleave the flap base, leaving a nick for ligation. Also involved in the long patch base excision repair (LP-BER) pathway, by cleaving within the apurinic/apyrimidinic (AP) site-terminated flap. Acts as a genome stabilization factor that prevents flaps from equilibrating into structures that lead to duplications and deletions. Also possesses 5'-3' exonuclease activity on nicked or gapped double-stranded DNA, and exhibits RNase H activity. Also involved in replication and repair of rDNA and in repairing mitochondrial DNA. This Trypanosoma brucei brucei (strain 927/4 GUTat10.1) protein is Flap endonuclease 1.